The chain runs to 441 residues: Mannose-6-phosphate isomerase 2 (441 aa).

Zn(2+)-binding residues include Gln131, His133, Glu158, and His296. Arg315 is a catalytic residue.

The protein belongs to the mannose-6-phosphate isomerase type 1 family. Zn(2+) serves as cofactor. As to expression, not expressed in any organs under light (at protein level).

The enzyme catalyses D-mannose 6-phosphate = D-fructose 6-phosphate. It functions in the pathway nucleotide-sugar biosynthesis; GDP-alpha-D-mannose biosynthesis; alpha-D-mannose 1-phosphate from D-fructose 6-phosphate: step 1/2. With respect to regulation, inhibited by EDTA, Zn(2+), Cd(2+), DTT, p-chloromercuribenzoate and L-ascorbic acid (AsA). Involved in the synthesis of the GDP-mannose and dolichol-phosphate-mannose required for a number of critical mannosyl transfer reactions. This chain is Mannose-6-phosphate isomerase 2 (PMI2), found in Arabidopsis thaliana (Mouse-ear cress).